The chain runs to 55 residues: ATP synthase F(0) complex subunit 8 (55 aa).

A helical membrane pass occupies residues 8 to 24; the sequence is PWFSIMVMTWLTLALLI. The interval 35-55 is disordered; the sequence is NPPSKKPSLITKPTPWAWPWT.

The protein belongs to the ATPase protein 8 family. As to quaternary structure, component of the ATP synthase complex composed at least of ATP5F1A/subunit alpha, ATP5F1B/subunit beta, ATP5MC1/subunit c (homooctomer), MT-ATP6/subunit a, MT-ATP8/subunit 8, ATP5ME/subunit e, ATP5MF/subunit f, ATP5MG/subunit g, ATP5MK/subunit k, ATP5MJ/subunit j, ATP5F1C/subunit gamma, ATP5F1D/subunit delta, ATP5F1E/subunit epsilon, ATP5PF/subunit F6, ATP5PB/subunit b, ATP5PD/subunit d, ATP5PO/subunit OSCP. ATP synthase complex consists of a soluble F(1) head domain (subunits alpha(3) and beta(3)) - the catalytic core - and a membrane F(0) domain - the membrane proton channel (subunits c, a, 8, e, f, g, k and j). These two domains are linked by a central stalk (subunits gamma, delta, and epsilon) rotating inside the F1 region and a stationary peripheral stalk (subunits F6, b, d, and OSCP).

It is found in the mitochondrion membrane. Functionally, subunit 8, of the mitochondrial membrane ATP synthase complex (F(1)F(0) ATP synthase or Complex V) that produces ATP from ADP in the presence of a proton gradient across the membrane which is generated by electron transport complexes of the respiratory chain. ATP synthase complex consist of a soluble F(1) head domain - the catalytic core - and a membrane F(1) domain - the membrane proton channel. These two domains are linked by a central stalk rotating inside the F(1) region and a stationary peripheral stalk. During catalysis, ATP synthesis in the catalytic domain of F(1) is coupled via a rotary mechanism of the central stalk subunits to proton translocation. In vivo, can only synthesize ATP although its ATP hydrolase activity can be activated artificially in vitro. Part of the complex F(0) domain. The sequence is that of ATP synthase F(0) complex subunit 8 from Anas platyrhynchos (Mallard).